A 324-amino-acid polypeptide reads, in one-letter code: Probable pectinesterase A (324 aa).

Positions 1–19 (MHGSLLKLALLSFSLASSA) are cleaved as a signal peptide. Gln-142 is a substrate binding site. Asp-165 (proton donor) is an active-site residue. Asp-186 acts as the Nucleophile in catalysis. Substrate is bound by residues Arg-246 and Trp-248. Asn-285 is a glycosylation site (N-linked (GlcNAc...) asparagine).

Belongs to the pectinesterase family.

The protein resides in the secreted. It catalyses the reaction [(1-&gt;4)-alpha-D-galacturonosyl methyl ester](n) + n H2O = [(1-&gt;4)-alpha-D-galacturonosyl](n) + n methanol + n H(+). Its pathway is glycan metabolism; pectin degradation; 2-dehydro-3-deoxy-D-gluconate from pectin: step 1/5. Involved in maceration and soft-rotting of plant tissue. This chain is Probable pectinesterase A (pmeA), found in Aspergillus flavus (strain ATCC 200026 / FGSC A1120 / IAM 13836 / NRRL 3357 / JCM 12722 / SRRC 167).